The chain runs to 417 residues: Probable secreted beta-glucosidase PSU1 (417 aa).

The first 18 residues, 1–18, serve as a signal peptide directing secretion; that stretch reads MRFFETLALALLTTGALA.

Belongs to the SUN family.

The protein localises to the secreted. It localises to the cell wall. Its function is as follows. Involved in cell wall synthesis. May be required for the activation of 1,3-beta-glucan synthase. This chain is Probable secreted beta-glucosidase PSU1 (psu1), found in Schizosaccharomyces pombe (strain 972 / ATCC 24843) (Fission yeast).